The primary structure comprises 82 residues: Translational regulator CsrA (82 aa).

Belongs to the CsrA/RsmA family. In terms of assembly, homodimer; the beta-strands of each monomer intercalate to form a hydrophobic core, while the alpha-helices form wings that extend away from the core.

The protein resides in the cytoplasm. In terms of biological role, a translational regulator that binds mRNA to regulate translation initiation and/or mRNA stability. Usually binds in the 5'-UTR at or near the Shine-Dalgarno sequence preventing ribosome-binding, thus repressing translation. Its main target seems to be the major flagellin gene, while its function is anatagonized by FliW. The protein is Translational regulator CsrA of Geobacillus sp. (strain WCH70).